Here is a 180-residue protein sequence, read N- to C-terminus: Large ribosomal subunit protein uL5 (180 aa).

Belongs to the universal ribosomal protein uL5 family. Part of the 50S ribosomal subunit; part of the 5S rRNA/L5/L18/L25 subcomplex. Contacts the 5S rRNA and the P site tRNA. Forms a bridge to the 30S subunit in the 70S ribosome.

Its function is as follows. This is one of the proteins that bind and probably mediate the attachment of the 5S RNA into the large ribosomal subunit, where it forms part of the central protuberance. In the 70S ribosome it contacts protein S13 of the 30S subunit (bridge B1b), connecting the 2 subunits; this bridge is implicated in subunit movement. Contacts the P site tRNA; the 5S rRNA and some of its associated proteins might help stabilize positioning of ribosome-bound tRNAs. This is Large ribosomal subunit protein uL5 from Lacticaseibacillus casei (strain BL23) (Lactobacillus casei).